The chain runs to 672 residues: Probable copper-transporting P-type ATPase B (672 aa).

Positions 1 to 17 (MEHHSHQEHENHTSHGN) are enriched in basic and acidic residues. Positions 1–22 (MEHHSHQEHENHTSHGNHEHHH) are disordered. 6 helical membrane passes run 30–50 (FFIS…MGVK), 55–75 (ISFT…FFYG), 93–113 (GMMT…LYAF), 125–145 (TMDF…GHWI), 282–302 (GYLF…WMLI), and 313–333 (LVTV…PLVT). The 4-aspartylphosphate intermediate role is filled by Asp-365. Positions 563 and 567 each coordinate Mg(2+). The next 2 membrane-spanning stretches (helical) occupy residues 621–643 (LWWG…ASIG) and 647–669 (SPAV…AFTL).

Belongs to the cation transport ATPase (P-type) (TC 3.A.3) family. Type IB subfamily.

The protein resides in the cell membrane. It carries out the reaction Cu(+)(in) + ATP + H2O = Cu(+)(out) + ADP + phosphate + H(+). Its function is as follows. Involved in copper transport. The sequence is that of Probable copper-transporting P-type ATPase B (copB) from Staphylococcus aureus.